Reading from the N-terminus, the 594-residue chain is Bifunctional lycopene cyclase/phytoene synthase (594 aa).

Residues 1–249 form a lycopene beta-cyclase region; it reads MGLDYLMVHV…VVFGIAAMHN (249 aa). 7 consecutive transmembrane segments (helical) span residues 3-23, 35-55, 77-97, 130-150, 153-173, 176-196, and 227-247; these read LDYL…LTIL, KIVL…SYLI, LEEV…YIIF, LGTL…YIGG, MYLG…WVLM, FLLA…TLYL, and IEEA…IAAM. Residues 256 to 594 are phytoene synthase; sequence YKAFISTTAM…RFKRAWLAML (339 aa).

The protein in the N-terminal section; belongs to the lycopene beta-cyclase family. It in the C-terminal section; belongs to the phytoene/squalene synthase family.

The protein resides in the membrane. It catalyses the reaction all-trans-lycopene = gamma-carotene. The catalysed reaction is gamma-carotene = all-trans-beta-carotene. The enzyme catalyses 2 (2E,6E,10E)-geranylgeranyl diphosphate = 15-cis-phytoene + 2 diphosphate. It participates in carotenoid biosynthesis; beta-carotene biosynthesis. It functions in the pathway carotenoid biosynthesis; phytoene biosynthesis; all-trans-phytoene from geranylgeranyl diphosphate: step 1/1. Bifunctional enzyme that catalyzes the reactions from geranylgeranyl diphosphate to phytoene (phytoene synthase) and lycopene to beta-carotene via the intermediate gamma-carotene (lycopene cyclase). The sequence is that of Bifunctional lycopene cyclase/phytoene synthase from Arthroderma gypseum (strain ATCC MYA-4604 / CBS 118893) (Microsporum gypseum).